The primary structure comprises 135 residues: Large ribosomal subunit protein bL17 (135 aa).

This sequence belongs to the bacterial ribosomal protein bL17 family. As to quaternary structure, part of the 50S ribosomal subunit. Contacts protein L32.

The protein is Large ribosomal subunit protein bL17 of Listeria welshimeri serovar 6b (strain ATCC 35897 / DSM 20650 / CCUG 15529 / CIP 8149 / NCTC 11857 / SLCC 5334 / V8).